A 438-amino-acid chain; its full sequence is Putative B3 domain-containing protein Os04g0676650 (438 aa).

The segment covering 1–11 has biased composition (low complexity); the sequence is MADARGSSSSS. Disordered regions lie at residues 1 to 30 and 225 to 285; these read MADA…DFVG and SSSH…MNQN. Positions 12–30 are enriched in gly residues; it reads GDGGGGEGKGGAGHGDFVG. The span at 258-269 shows a compositional bias: basic and acidic residues; sequence RRSDMESEKNDD. The span at 272–285 shows a compositional bias: polar residues; the sequence is DQTPVSEPPSMNQN. Positions 302–404 form a DNA-binding region, TF-B3; sequence LRKELTNSDV…KFVVRGEKAI (103 aa).

The protein resides in the nucleus. This chain is Putative B3 domain-containing protein Os04g0676650, found in Oryza sativa subsp. japonica (Rice).